Reading from the N-terminus, the 268-residue chain is MERYQQLFKQLAAKKEGAFVPFVQLGDPSPAMSLNIIDTLIAAGADALELGIPFSDPLADGPTIQNAALRAFAAGVTPGICFEILAEIRQKHPTIPIGLLMYANLVFHNGIDHFYQRCAEVGVDSVLIADVPFEESAPFRAAALRHGIAPIFICPPNADDDLLREIASHGRGYTYLLSRAGVTGAENHGQLPLNHLVDKLREYNAAPALQGFGISEPAQVKASLAAGAAGAISGSAIVKIIEKNVAQPVEMLVQLTRFVTEMKAATRS.

Residues Glu49 and Asp60 each act as proton acceptor in the active site.

This sequence belongs to the TrpA family. As to quaternary structure, tetramer of two alpha and two beta chains.

The catalysed reaction is (1S,2R)-1-C-(indol-3-yl)glycerol 3-phosphate + L-serine = D-glyceraldehyde 3-phosphate + L-tryptophan + H2O. It functions in the pathway amino-acid biosynthesis; L-tryptophan biosynthesis; L-tryptophan from chorismate: step 5/5. In terms of biological role, the alpha subunit is responsible for the aldol cleavage of indoleglycerol phosphate to indole and glyceraldehyde 3-phosphate. The sequence is that of Tryptophan synthase alpha chain from Yersinia pestis bv. Antiqua (strain Antiqua).